The sequence spans 404 residues: Argininosuccinate synthase (404 aa).

ATP is bound by residues 10–18 (AYSGGVDTS) and Ala-38. Tyr-89 contributes to the L-citrulline binding site. Gly-119 serves as a coordination point for ATP. L-aspartate-binding residues include Thr-121, Asn-125, and Asp-126. Residue Asn-125 coordinates L-citrulline. Residues Arg-129, Ser-177, Ser-186, Glu-262, and Tyr-274 each contribute to the L-citrulline site.

Belongs to the argininosuccinate synthase family. Type 1 subfamily. As to quaternary structure, homotetramer.

Its subcellular location is the cytoplasm. The enzyme catalyses L-citrulline + L-aspartate + ATP = 2-(N(omega)-L-arginino)succinate + AMP + diphosphate + H(+). It participates in amino-acid biosynthesis; L-arginine biosynthesis; L-arginine from L-ornithine and carbamoyl phosphate: step 2/3. The sequence is that of Argininosuccinate synthase from Prochlorococcus marinus (strain MIT 9301).